The chain runs to 451 residues: Eukaryotic translation initiation factor 5 (451 aa).

Residue 29-36 (GRGNGIKT) coordinates GTP. 2 disordered regions span residues 143 to 233 (LKNP…DDDV) and 263 to 299 (STEE…TKPS). Over residues 147-178 (PEQKKGGKDKKAMRRAEKERLKEGEAADEEQK) the composition is skewed to basic and acidic residues. A compositionally biased stretch (basic residues) spans 179–188 (KLKKDAKKKG). Composition is skewed to basic and acidic residues over residues 208–226 (DEDH…KAAA) and 266–279 (ETEK…HKDG). One can recognise a W2 domain in the interval 290-449 (NDKPAVTKPS…QSAESDEEGD (160 aa)).

The protein belongs to the eIF-2-beta/eIF-5 family.

In terms of biological role, catalyzes the hydrolysis of GTP bound to the 40S ribosomal initiation complex (40S.mRNA.Met-tRNA[F].eIF-2.GTP) with the subsequent joining of a 60S ribosomal subunit resulting in the release of eIF-2 and the guanine nucleotide. The subsequent joining of a 60S ribosomal subunit results in the formation of a functional 80S initiation complex (80S.mRNA.Met-tRNA[F]). This is Eukaryotic translation initiation factor 5 (EIF5) from Zea mays (Maize).